A 66-amino-acid chain; its full sequence is Large ribosomal subunit protein bL32 (66 aa).

This sequence belongs to the bacterial ribosomal protein bL32 family.

The sequence is that of Large ribosomal subunit protein bL32 from Leptospira interrogans serogroup Icterohaemorrhagiae serovar copenhageni (strain Fiocruz L1-130).